The primary structure comprises 436 residues: Xylose isomerase (436 aa).

Active-site residues include H100 and D103. Mg(2+) contacts are provided by E231, E267, H270, D295, D306, D308, and D338.

The protein belongs to the xylose isomerase family. Homotetramer. The cofactor is Mg(2+).

It localises to the cytoplasm. The enzyme catalyses alpha-D-xylose = alpha-D-xylulofuranose. The chain is Xylose isomerase from Chelativorans sp. (strain BNC1).